A 48-amino-acid chain; its full sequence is Large ribosomal subunit protein bL33B (48 aa).

The protein belongs to the bacterial ribosomal protein bL33 family.

The sequence is that of Large ribosomal subunit protein bL33B from Lactococcus lactis subsp. cremoris (strain MG1363).